The primary structure comprises 274 residues: Large ribosomal subunit protein uL2cz/uL2cy (274 aa).

Disordered stretches follow at residues 1–22 (MAIN…DSQV) and 224–274 (NPVD…RRSK).

It belongs to the universal ribosomal protein uL2 family. Part of the 50S ribosomal subunit.

Its subcellular location is the plastid. The protein resides in the chloroplast. The polypeptide is Large ribosomal subunit protein uL2cz/uL2cy (rpl2-A) (Helianthus annuus (Common sunflower)).